Here is a 381-residue protein sequence, read N- to C-terminus: Short-chain dehydrogenase anuD (381 aa).

NADP(+) contacts are provided by Ile-84, Lys-109, Asp-133, Asn-158, Tyr-244, and Lys-248. The Proton acceptor role is filled by Tyr-244. The Proton donor role is filled by Tyr-244. Lys-248 (lowers pKa of active site Tyr) is an active-site residue.

It belongs to the short-chain dehydrogenases/reductases (SDR) family.

Its function is as follows. Highly reducing polyketide synthase; part of the gene cluster that mediates the biosynthesis of annullatin D, an alkylated aromatic polyketide with a fused dihydrobenzofuran lactone ring system that exhibits potent agonistic activities toward the cannabinoid receptors. AnuD does not seem to play a role within the pathway. The annullatin backbone 2-hydroxymethyl-3-pentylphenol is assembled from one acetyl-CoA starter unit and 5 malonyl-CoA elongation units by cooperation of the highly reducing polyketide synthase anuA, the short-chain dehydrogenase anuB and the oxidoreductase anuC, before being hydroxylated at the C-5 alkyl chain by the cytochrome P450 monooxygenase anuE to form (8S)-annullatin E. The prenyltransferase anuH subsequently installs one isoprenyl group at the benzene ring to form (8S)-annullatin J. Enzymatic or nonenzymatic dihydro-benzofuran ring formation between the prenyl and the phenolic hydroxyl groups in (8S)-annullatin J results in two diastereomers (2S,9S)-annullatin H and compound 12. The intermediate (2S,9S)-annullatin H is then converted to (2S,9S)-annullatin D by the FAD-linked oxidoreductase anuG-catalyzed five-member lactone ring formation. The isomer 12 acts as a substrate for the short-chain dehydrogenase anuF and is oxidized to (2R)-annullatin F, which is subsequently acetylated by an acetyltransferase leading to (2R)-annullatin G formation. The remaining enzymes identified within the cluster, anuD, anuI and anuJ, seem not to be involved in annullatin biosynthesis. This is Short-chain dehydrogenase anuD from Penicillium roqueforti (strain FM164).